A 166-amino-acid polypeptide reads, in one-letter code: Transcriptional repressor NrdR (166 aa).

The segment at 3–34 (CPHCHHNGSRVVDSRPTDDGRVIRRRRECESC) is a zinc-finger region. An ATP-cone domain is found at 49 to 139 (LLVIKKNGTR…VYRQFKDTGV (91 aa)).

The protein belongs to the NrdR family. Zn(2+) is required as a cofactor.

Functionally, negatively regulates transcription of bacterial ribonucleotide reductase nrd genes and operons by binding to NrdR-boxes. The chain is Transcriptional repressor NrdR from Levilactobacillus brevis (strain ATCC 367 / BCRC 12310 / CIP 105137 / JCM 1170 / LMG 11437 / NCIMB 947 / NCTC 947) (Lactobacillus brevis).